The chain runs to 131 residues: Large ribosomal subunit protein bL19 (131 aa).

It belongs to the bacterial ribosomal protein bL19 family.

In terms of biological role, this protein is located at the 30S-50S ribosomal subunit interface and may play a role in the structure and function of the aminoacyl-tRNA binding site. The polypeptide is Large ribosomal subunit protein bL19 (Anaeromyxobacter dehalogenans (strain 2CP-C)).